Consider the following 275-residue polypeptide: Methylesterase 10 (275 aa).

Ser-96 acts as the Acyl-ester intermediate in catalysis. Active-site charge relay system residues include Asp-225 and His-253.

Belongs to the AB hydrolase superfamily. Methylesterase family.

The enzyme catalyses methyl (-)-jasmonate + H2O = jasmonate + methanol + H(+). It participates in plant hormone biosynthesis. It functions in the pathway lipid metabolism; oxylipin biosynthesis. Its function is as follows. Methylesterase shown to have methyl jasmonate (MeJA) esterase activity in vitro. This chain is Methylesterase 10, found in Arabidopsis thaliana (Mouse-ear cress).